Reading from the N-terminus, the 280-residue chain is Pantothenate synthetase (280 aa).

30 to 37 (MGYLHEGH) serves as a coordination point for ATP. Catalysis depends on H37, which acts as the Proton donor. Position 61 (Q61) interacts with (R)-pantoate. Q61 contributes to the beta-alanine binding site. 147-150 (GQKD) is an ATP binding site. A (R)-pantoate-binding site is contributed by Q153. Residues V176 and 184 to 187 (MSSR) each bind ATP.

Belongs to the pantothenate synthetase family. As to quaternary structure, homodimer.

Its subcellular location is the cytoplasm. The enzyme catalyses (R)-pantoate + beta-alanine + ATP = (R)-pantothenate + AMP + diphosphate + H(+). It participates in cofactor biosynthesis; (R)-pantothenate biosynthesis; (R)-pantothenate from (R)-pantoate and beta-alanine: step 1/1. Catalyzes the condensation of pantoate with beta-alanine in an ATP-dependent reaction via a pantoyl-adenylate intermediate. In Fervidobacterium nodosum (strain ATCC 35602 / DSM 5306 / Rt17-B1), this protein is Pantothenate synthetase.